Reading from the N-terminus, the 439-residue chain is Protein translocase subunit SecY (439 aa).

Helical transmembrane passes span 23-43 (IASV…PIPG), 77-97 (IFAL…LLTL), 125-145 (LVLA…ISGM), 154-174 (FYFY…LMWL), 187-207 (ISII…VHTI), 217-237 (ILLF…VVFI), 274-294 (VIPA…ISWF), 317-337 (YLIL…GLVF), 369-389 (IMIR…LIPE), and 397-417 (VPFY…MDFI).

It belongs to the SecY/SEC61-alpha family. Component of the Sec protein translocase complex. Heterotrimer consisting of SecY, SecE and SecG subunits. The heterotrimers can form oligomers, although 1 heterotrimer is thought to be able to translocate proteins. Interacts with the ribosome. Interacts with SecDF, and other proteins may be involved. Interacts with SecA.

It localises to the cell membrane. Functionally, the central subunit of the protein translocation channel SecYEG. Consists of two halves formed by TMs 1-5 and 6-10. These two domains form a lateral gate at the front which open onto the bilayer between TMs 2 and 7, and are clamped together by SecE at the back. The channel is closed by both a pore ring composed of hydrophobic SecY resides and a short helix (helix 2A) on the extracellular side of the membrane which forms a plug. The plug probably moves laterally to allow the channel to open. The ring and the pore may move independently. The chain is Protein translocase subunit SecY from Buchnera aphidicola subsp. Schizaphis graminum (strain Sg).